We begin with the raw amino-acid sequence, 31 residues long: Photosystem II reaction center protein T (31 aa).

A helical membrane pass occupies residues 3–23 (SFAYILILTLAIATLFFAIAF).

Belongs to the PsbT family. In terms of assembly, PSII is composed of 1 copy each of membrane proteins PsbA, PsbB, PsbC, PsbD, PsbE, PsbF, PsbH, PsbI, PsbJ, PsbK, PsbL, PsbM, PsbT, PsbX, PsbY, PsbZ, Psb30/Ycf12, peripheral proteins PsbO, CyanoQ (PsbQ), PsbU, PsbV and a large number of cofactors. It forms dimeric complexes.

It is found in the cellular thylakoid membrane. Functionally, found at the monomer-monomer interface of the photosystem II (PS II) dimer, plays a role in assembly and dimerization of PSII. PSII is a light-driven water plastoquinone oxidoreductase, using light energy to abstract electrons from H(2)O, generating a proton gradient subsequently used for ATP formation. This is Photosystem II reaction center protein T from Synechococcus sp. (strain WH7803).